A 589-amino-acid polypeptide reads, in one-letter code: ATP-dependent lipid A-core flippase (589 aa).

Transmembrane regions (helical) follow at residues 33–53 (VLAI…AWII), 70–90 (LWVP…TFAS), 148–168 (VVVL…MTYL), 170–190 (GWLV…VTAA), 262–282 (LGAV…VILE), and 283–303 (TISP…LPPL). Residues 33–315 (VLAIVCMVLA…VIGVNAEIQK (283 aa)) form the ABC transmembrane type-1 domain. An ABC transporter domain is found at 347–583 (IEFDRVAFRY…NGHYASLHRV (237 aa)). Residue 381–388 (GRSGSGKT) participates in ATP binding.

The protein belongs to the ABC transporter superfamily. Lipid exporter (TC 3.A.1.106) family. In terms of assembly, homodimer.

It is found in the cell inner membrane. It carries out the reaction ATP + H2O + lipid A-core oligosaccharideSide 1 = ADP + phosphate + lipid A-core oligosaccharideSide 2.. In terms of biological role, involved in lipopolysaccharide (LPS) biosynthesis. Translocates lipid A-core from the inner to the outer leaflet of the inner membrane. Transmembrane domains (TMD) form a pore in the inner membrane and the ATP-binding domain (NBD) is responsible for energy generation. In Alkalilimnicola ehrlichii (strain ATCC BAA-1101 / DSM 17681 / MLHE-1), this protein is ATP-dependent lipid A-core flippase.